Consider the following 283-residue polypeptide: Phosphatidylglycerol--prolipoprotein diacylglyceryl transferase (283 aa).

4 consecutive transmembrane segments (helical) span residues 19 to 39 (IGPI…LIGV), 59 to 79 (LSIW…VLFQ), 90 to 110 (IIAI…GTLA), and 120 to 140 (VPFW…QAIG). R141 is an a 1,2-diacyl-sn-glycero-3-phospho-(1'-sn-glycerol) binding site. 3 helical membrane passes run 181–201 (TFLY…TLFF), 212–232 (VGTL…WIEG), and 245–265 (IAQV…AWLY).

This sequence belongs to the Lgt family.

The protein resides in the cell inner membrane. It catalyses the reaction L-cysteinyl-[prolipoprotein] + a 1,2-diacyl-sn-glycero-3-phospho-(1'-sn-glycerol) = an S-1,2-diacyl-sn-glyceryl-L-cysteinyl-[prolipoprotein] + sn-glycerol 1-phosphate + H(+). Its pathway is protein modification; lipoprotein biosynthesis (diacylglyceryl transfer). Catalyzes the transfer of the diacylglyceryl group from phosphatidylglycerol to the sulfhydryl group of the N-terminal cysteine of a prolipoprotein, the first step in the formation of mature lipoproteins. The polypeptide is Phosphatidylglycerol--prolipoprotein diacylglyceryl transferase (Nostoc sp. (strain PCC 7120 / SAG 25.82 / UTEX 2576)).